The sequence spans 253 residues: Imidazole glycerol phosphate synthase subunit HisF (253 aa).

Active-site residues include Asp-11 and Asp-130.

It belongs to the HisA/HisF family. As to quaternary structure, heterodimer of HisH and HisF.

Its subcellular location is the cytoplasm. The catalysed reaction is 5-[(5-phospho-1-deoxy-D-ribulos-1-ylimino)methylamino]-1-(5-phospho-beta-D-ribosyl)imidazole-4-carboxamide + L-glutamine = D-erythro-1-(imidazol-4-yl)glycerol 3-phosphate + 5-amino-1-(5-phospho-beta-D-ribosyl)imidazole-4-carboxamide + L-glutamate + H(+). It participates in amino-acid biosynthesis; L-histidine biosynthesis; L-histidine from 5-phospho-alpha-D-ribose 1-diphosphate: step 5/9. IGPS catalyzes the conversion of PRFAR and glutamine to IGP, AICAR and glutamate. The HisF subunit catalyzes the cyclization activity that produces IGP and AICAR from PRFAR using the ammonia provided by the HisH subunit. This Clostridium botulinum (strain Alaska E43 / Type E3) protein is Imidazole glycerol phosphate synthase subunit HisF.